Consider the following 264-residue polypeptide: 5'-nucleotidase SurE (264 aa).

Positions 8, 9, 39, and 95 each coordinate a divalent metal cation.

Belongs to the SurE nucleotidase family. A divalent metal cation is required as a cofactor.

The protein resides in the cytoplasm. It carries out the reaction a ribonucleoside 5'-phosphate + H2O = a ribonucleoside + phosphate. Functionally, nucleotidase that shows phosphatase activity on nucleoside 5'-monophosphates. The sequence is that of 5'-nucleotidase SurE from Syntrophomonas wolfei subsp. wolfei (strain DSM 2245B / Goettingen).